We begin with the raw amino-acid sequence, 71 residues long: Protein CYSTEINE-RICH TRANSMEMBRANE MODULE 8 (71 aa).

Positions 1–22 are enriched in polar residues; sequence MNQSAQNYFSVQKPSETSSGPY. The disordered stretch occupies residues 1-35; the sequence is MNQSAQNYFSVQKPSETSSGPYTSPPPIGYPTRDA. A helical membrane pass occupies residues 48–64; sequence NSKGVNPEGCCAAICCC.

Belongs to the CYSTM1 family. As to expression, mostly expressed in stems, siliques, roots and flowers and, to a lower extent, in leaves.

It localises to the membrane. Its subcellular location is the nucleus. Functionally, involved in resistance to abiotic stress. This chain is Protein CYSTEINE-RICH TRANSMEMBRANE MODULE 8, found in Arabidopsis thaliana (Mouse-ear cress).